A 294-amino-acid chain; its full sequence is Lycopene elongase/hydratase (294 aa).

Transmembrane regions (helical) follow at residues 31 to 51 (FWLY…DGPG), 53 to 73 (LFSP…NVFL), 115 to 135 (LALL…LAWM), 160 to 180 (GLYI…APPA), 182 to 202 (AVVG…IPDI), 222 to 242 (TYYY…FTHW), 243 to 263 (VFGV…GVGV), and 274 to 294 (AINT…MLYG).

The protein belongs to the UbiA prenyltransferase family.

The protein localises to the cell membrane. It catalyses the reaction all-trans-lycopene + dimethylallyl diphosphate + H2O = dihydroisopentenyldehydrorhodopin + diphosphate. The enzyme catalyses isopentenyldehydrorhodopin + dimethylallyl diphosphate + H2O = dihydrobisanhydrobacterioruberin + diphosphate. It functions in the pathway carotenoid biosynthesis. Its function is as follows. Involved in the biosynthesis of the acyclic C50 carotenoid bacterioruberin (BR). Acts as a bifunctional elongase/hydratase that catalyzes the elongation of lycopene by attaching a C(5) isoprene unit at C-2, as well as the hydroxylation of the previous end of the molecule. The enzyme acts at both ends of the substrate, and catalyzes the conversion of lycopene to the C(45) intermediate dihydroisopentenyldehydrorhodopin (DH-IDR) and the conversion of isopentenyldehydrorhodopin (IDR) to the C(50) carotenoid dihydrobisanhydrobacterioruberin (DH-BABR). Can also catalyze the conversion of lycopene to tetrahydrobisanhydrobacterioruberin (TH-BABR). In Haloarcula japonica (strain ATCC 49778 / DSM 6131 / JCM 7785 / NBRC 101032 / NCIMB 13157 / TR-1), this protein is Lycopene elongase/hydratase.